We begin with the raw amino-acid sequence, 240 residues long: RING finger protein 151 (240 aa).

An RING-type zinc finger spans residues 20 to 58 (CSVCHGVLKRPVRLPCSHIFCKKCILRWLARQKTCPCCR). The TRAF-type zinc-finger motif lies at 101 to 156 (GHQDSCPFELMVCPNEGCMLRVPRGALDEHRQNCQHGAYHRCSLGCGATLGPVERA).

The sequence is that of RING finger protein 151 (RNF151) from Bos taurus (Bovine).